The following is a 409-amino-acid chain: Peptidase T (409 aa).

His78 is a binding site for Zn(2+). Asp80 is an active-site residue. Residue Asp140 participates in Zn(2+) binding. Glu173 serves as the catalytic Proton acceptor. Zn(2+) contacts are provided by Glu174, Asp196, and His379.

It belongs to the peptidase M20B family. Zn(2+) serves as cofactor.

The protein localises to the cytoplasm. The catalysed reaction is Release of the N-terminal residue from a tripeptide.. Functionally, cleaves the N-terminal amino acid of tripeptides. The polypeptide is Peptidase T (Salmonella choleraesuis (strain SC-B67)).